The chain runs to 157 residues: Small ribosomal subunit protein uS7 (157 aa).

It belongs to the universal ribosomal protein uS7 family. Part of the 30S ribosomal subunit. Contacts proteins S9 and S11.

In terms of biological role, one of the primary rRNA binding proteins, it binds directly to 16S rRNA where it nucleates assembly of the head domain of the 30S subunit. Is located at the subunit interface close to the decoding center, probably blocks exit of the E-site tRNA. This is Small ribosomal subunit protein uS7 from Caldicellulosiruptor saccharolyticus (strain ATCC 43494 / DSM 8903 / Tp8T 6331).